Here is a 288-residue protein sequence, read N- to C-terminus: Co-chaperone protein DjlA (288 aa).

The Periplasmic segment spans residues 1–6; sequence MEFIGK. A helical transmembrane segment spans residues 7 to 30; sequence IIGVFLGWKVGGFFGAIAGLILGS. Over 31-288 the chain is Cytoplasmic; that stretch reads IADKKLYELG…DLICKAKGWK (258 aa). The J domain maps to 222-288; that stretch reads DAYKVLGVTE…DLICKAKGWK (67 aa).

As to quaternary structure, homodimer.

It is found in the cell inner membrane. Regulatory DnaK co-chaperone. Direct interaction between DnaK and DjlA is needed for the induction of the wcaABCDE operon, involved in the synthesis of a colanic acid polysaccharide capsule, possibly through activation of the RcsB/RcsC phosphotransfer signaling pathway. The colanic acid capsule may help the bacterium survive conditions outside the host. In Haemophilus influenzae (strain ATCC 51907 / DSM 11121 / KW20 / Rd), this protein is Co-chaperone protein DjlA.